Here is a 91-residue protein sequence, read N- to C-terminus: Probable Fe(2+)-trafficking protein (91 aa).

The protein belongs to the Fe(2+)-trafficking protein family.

In terms of biological role, could be a mediator in iron transactions between iron acquisition and iron-requiring processes, such as synthesis and/or repair of Fe-S clusters in biosynthetic enzymes. In Xanthomonas euvesicatoria pv. vesicatoria (strain 85-10) (Xanthomonas campestris pv. vesicatoria), this protein is Probable Fe(2+)-trafficking protein.